The primary structure comprises 355 residues: Vacuolar protein sorting-associated protein 37C (355 aa).

Ser29 carries the phosphoserine modification. Residues Val78–Ala167 enclose the VPS37 C-terminal domain. The disordered stretch occupies residues Lys159–Tyr355. Composition is skewed to pro residues over residues Ala170–Thr186 and Pro194–Leu205. The segment covering Pro246–Gly257 has biased composition (low complexity). Positions Pro321–Tyr355 are enriched in pro residues.

The protein belongs to the VPS37 family. As to quaternary structure, component of the ESCRT-I complex (endosomal sorting complex required for transport I) which consists of TSG101, VPS28, a VPS37 protein (VPS37A to -D) and MVB12A or MVB12B in a 1:1:1:1 stoichiometry. Interacts with TSG101, VPS28, MVB12A and MVB12B. Component of the ESCRT-I complex (endosomal sorting complex required for transport I) which consists of TSG101, VPS28, a VPS37 protein (VPS37A to -D) and UBAP1 in a 1:1:1:1 stoichiometry. Interacts with HGS and STAM2. Interacts with CEP55. Phosphorylated by TBK1.

The protein localises to the late endosome membrane. Functionally, component of the ESCRT-I complex, a regulator of vesicular trafficking process. Required for the sorting of endocytic ubiquitinated cargos into multivesicular bodies. May be involved in cell growth and differentiation. The protein is Vacuolar protein sorting-associated protein 37C (VPS37C) of Pongo abelii (Sumatran orangutan).